A 411-amino-acid chain; its full sequence is Zinc finger protein draculin (411 aa).

The disordered stretch occupies residues 1–33 (MKNTTKPCRTEHHNAEGQRDRMEGNKKGETKAK). Residues 8 to 32 (CRTEHHNAEGQRDRMEGNKKGETKA) are compositionally biased toward basic and acidic residues. 13 consecutive C2H2-type zinc fingers follow at residues 36 to 58 (VACS…MRVH), 64 to 86 (YRCD…LDIH), 92 to 114 (YTCD…MTLH), 120 to 142 (YKCD…MKLH), 148 to 170 (HKCE…LMVH), 176 to 198 (YTCD…MNIH), 204 to 226 (YTCD…MRFH), 232 to 254 (FTCD…MKIH), 260 to 282 (YTCD…MTHH), 288 to 310 (FHCD…IKTH), 316 to 338 (YSCL…EKRH), 344 to 366 (FMCF…LPVH), and 372 to 394 (YMCS…EKTH).

In terms of tissue distribution, specifically expressed in the hematopoietic lineage during embryogenesis; first expressed at the late blastula stage around the blastoderm margin. During gastrulation, restricted to the ventral mesoderm, the presumptive prechordal plate and the dorso-marginal cells of the organizer. At the 3-somite stage, strongly expressed in a caudal domain (marking the erythroid lineage) and a cephalic domain of the lateral mesoderm. At the 8- to 10-somite stage, caudal expression is in two bands of lateral mesoderm which later converge at the midline. Anterior expression is also in two bands of lateral mesoderm which converge as two patches at the midline by the 15-somite stage, with increased scattering of single cells (macrophage precursors) away from the midline to the yolksac. Once at the yolksac, expression is lost. By 20-24 hours post-fertilization (hpf), expressed in proerythroblasts in the erythroid blood island centered above the uro-genital opening. Expression persists in circulating erythroblasts but is lost in mature erythrocytes.

This is Zinc finger protein draculin from Danio rerio (Zebrafish).